The sequence spans 363 residues: Molybdenum import ATP-binding protein ModC (363 aa).

The ABC transporter domain maps to 1-230 (MISARFSGRQ…PNLPLIHRPD (230 aa)). 31–38 (GPSGCGKT) contacts ATP. In terms of domain architecture, Mop spans 289–359 (DTTILNALPA…LKAMALSAPA (71 aa)).

This sequence belongs to the ABC transporter superfamily. Molybdate importer (TC 3.A.1.8) family. The complex is composed of two ATP-binding proteins (ModC), two transmembrane proteins (ModB) and a solute-binding protein (ModA).

Its subcellular location is the cell inner membrane. The enzyme catalyses molybdate(out) + ATP + H2O = molybdate(in) + ADP + phosphate + H(+). Part of the ABC transporter complex ModABC involved in molybdenum import. Responsible for energy coupling to the transport system. This Rhodobacter capsulatus (Rhodopseudomonas capsulata) protein is Molybdenum import ATP-binding protein ModC.